Reading from the N-terminus, the 276-residue chain is Cell wall synthesis protein KRE9 (276 aa).

An N-terminal signal peptide occupies residues 1–21; the sequence is MRLQRNSIICALVFLVSFVLG.

This sequence belongs to the KRE9/KNH1 family. In terms of processing, O-glycosylated.

It localises to the secreted. Its subcellular location is the cell wall. Functionally, involved in cell wall beta(1-&gt;6) glucan synthesis. The protein is Cell wall synthesis protein KRE9 of Saccharomyces cerevisiae (strain ATCC 204508 / S288c) (Baker's yeast).